Here is a 305-residue protein sequence, read N- to C-terminus: tRNA dimethylallyltransferase (305 aa).

Position 8-15 (8-15 (GPTAVGKT)) interacts with ATP. Position 10 to 15 (10 to 15 (TAVGKT)) interacts with substrate. Positions 33–36 (DSRQ) are interaction with substrate tRNA.

The protein belongs to the IPP transferase family. Monomer. The cofactor is Mg(2+).

The catalysed reaction is adenosine(37) in tRNA + dimethylallyl diphosphate = N(6)-dimethylallyladenosine(37) in tRNA + diphosphate. Functionally, catalyzes the transfer of a dimethylallyl group onto the adenine at position 37 in tRNAs that read codons beginning with uridine, leading to the formation of N6-(dimethylallyl)adenosine (i(6)A). The protein is tRNA dimethylallyltransferase of Thermotoga neapolitana (strain ATCC 49049 / DSM 4359 / NBRC 107923 / NS-E).